A 131-amino-acid polypeptide reads, in one-letter code: Profilin-5 (131 aa).

This sequence belongs to the profilin family. In terms of assembly, occurs in many kinds of cells as a complex with monomeric actin in a 1:1 ratio.

It localises to the cytoplasm. The protein localises to the cytoskeleton. Binds to actin and affects the structure of the cytoskeleton. At high concentrations, profilin prevents the polymerization of actin, whereas it enhances it at low concentrations. By binding to PIP2, it inhibits the formation of IP3 and DG. The sequence is that of Profilin-5 from Hevea brasiliensis (Para rubber tree).